A 312-amino-acid chain; its full sequence is Protein phosphatase 2A catalytic subunit B (312 aa).

Positions 55, 57, 83, and 115 each coordinate Mn(2+). Histidine 116 (proton donor) is an active-site residue. Positions 165 and 240 each coordinate Mn(2+).

This sequence belongs to the PPP phosphatase family. PP-2A subfamily. In terms of assembly, component of the Sca1 complex composed of at least gefA, gefH, scaA, phr, and the protein phosphatase 2A subunits pppA and pho2B. The cofactor is Mn(2+).

The protein resides in the cell membrane. The enzyme catalyses O-phospho-L-seryl-[protein] + H2O = L-seryl-[protein] + phosphate. It carries out the reaction O-phospho-L-threonyl-[protein] + H2O = L-threonyl-[protein] + phosphate. In terms of biological role, component of the Sca1 complex, a regulator of cell motility, chemotaxis and signal relay. The Sca1 complex is recruited to the plasma membrane in a chemoattractant- and F-actin-dependent manner and is enriched at the leading edge of chemotaxing cells where it regulates F-actin dynamics and signal relay by controlling the activation of rasC and the downstream target of rapamycin complex 2 (TORC2)-Akt/protein kinase B (PKB) pathway. The polypeptide is Protein phosphatase 2A catalytic subunit B (Dictyostelium discoideum (Social amoeba)).